Here is a 213-residue protein sequence, read N- to C-terminus: Adenylate kinase (213 aa).

ATP is bound at residue 10 to 15; sequence GAGKGT. Positions 30-59 are NMP; it reads STGDMFRAAMANQTEMGILAKSYIDKGDLV. AMP-binding positions include Thr-31, Arg-36, 57-59, 86-89, and Gln-93; these read DLV and GYPR. Residues 127-160 form an LID region; the sequence is GRIIHKETGETFHKVFNPPVGDYKEEDFYQREDD. ATP-binding positions include Arg-128 and 137–138; that span reads TF. Residues Arg-157 and Arg-168 each contribute to the AMP site. Gln-196 is an ATP binding site.

This sequence belongs to the adenylate kinase family. In terms of assembly, monomer.

It localises to the cytoplasm. It catalyses the reaction AMP + ATP = 2 ADP. The protein operates within purine metabolism; AMP biosynthesis via salvage pathway; AMP from ADP: step 1/1. Functionally, catalyzes the reversible transfer of the terminal phosphate group between ATP and AMP. Plays an important role in cellular energy homeostasis and in adenine nucleotide metabolism. This chain is Adenylate kinase, found in Streptococcus suis (strain 98HAH33).